We begin with the raw amino-acid sequence, 153 residues long: Large ribosomal subunit protein uL23m (153 aa).

The tract at residues 110-153 (IFPEKDKKSKEGSVEEMHEKFMEDERQRQKPDPRRGGVTEWFGL) is disordered. The span at 111–146 (FPEKDKKSKEGSVEEMHEKFMEDERQRQKPDPRRGG) shows a compositional bias: basic and acidic residues.

This sequence belongs to the universal ribosomal protein uL23 family. As to quaternary structure, component of the mitochondrial ribosome large subunit (39S) which comprises a 16S rRNA and about 50 distinct proteins.

The protein resides in the mitochondrion. The chain is Large ribosomal subunit protein uL23m (mrpl23) from Danio rerio (Zebrafish).